Reading from the N-terminus, the 292-residue chain is Elongation factor Ts (292 aa).

Positions 79–82 (TDFV) are involved in Mg(2+) ion dislocation from EF-Tu.

Belongs to the EF-Ts family.

The protein localises to the cytoplasm. Its function is as follows. Associates with the EF-Tu.GDP complex and induces the exchange of GDP to GTP. It remains bound to the aminoacyl-tRNA.EF-Tu.GTP complex up to the GTP hydrolysis stage on the ribosome. The protein is Elongation factor Ts of Xylella fastidiosa (strain Temecula1 / ATCC 700964).